A 421-amino-acid chain; its full sequence is 4-hydroxy-3-methylbut-2-en-1-yl diphosphate synthase (flavodoxin) (421 aa).

The [4Fe-4S] cluster site is built by cysteine 300, cysteine 303, cysteine 346, and glutamate 353.

It belongs to the IspG family. [4Fe-4S] cluster is required as a cofactor.

It catalyses the reaction (2E)-4-hydroxy-3-methylbut-2-enyl diphosphate + oxidized [flavodoxin] + H2O + 2 H(+) = 2-C-methyl-D-erythritol 2,4-cyclic diphosphate + reduced [flavodoxin]. It functions in the pathway isoprenoid biosynthesis; isopentenyl diphosphate biosynthesis via DXP pathway; isopentenyl diphosphate from 1-deoxy-D-xylulose 5-phosphate: step 5/6. In terms of biological role, converts 2C-methyl-D-erythritol 2,4-cyclodiphosphate (ME-2,4cPP) into 1-hydroxy-2-methyl-2-(E)-butenyl 4-diphosphate. The chain is 4-hydroxy-3-methylbut-2-en-1-yl diphosphate synthase (flavodoxin) from Laribacter hongkongensis (strain HLHK9).